The following is a 498-amino-acid chain: ATP synthase subunit beta, chloroplastic (498 aa).

Position 172-179 (172-179 (GGAGVGKT)) interacts with ATP.

This sequence belongs to the ATPase alpha/beta chains family. In terms of assembly, F-type ATPases have 2 components, CF(1) - the catalytic core - and CF(0) - the membrane proton channel. CF(1) has five subunits: alpha(3), beta(3), gamma(1), delta(1), epsilon(1). CF(0) has four main subunits: a(1), b(1), b'(1) and c(9-12).

The protein resides in the plastid. It localises to the chloroplast thylakoid membrane. It carries out the reaction ATP + H2O + 4 H(+)(in) = ADP + phosphate + 5 H(+)(out). Its function is as follows. Produces ATP from ADP in the presence of a proton gradient across the membrane. The catalytic sites are hosted primarily by the beta subunits. This is ATP synthase subunit beta, chloroplastic from Gossypium hirsutum (Upland cotton).